Reading from the N-terminus, the 1064-residue chain is Carbamoyl phosphate synthase pyrimidine-specific large chain (1064 aa).

Residues 1-401 are carboxyphosphate synthetic domain; it reads MPKRRDIETI…SLLKAVRSLE (401 aa). Residues arginine 129, arginine 169, glycine 175, glycine 176, arginine 208, isoleucine 210, glycine 241, isoleucine 242, histidine 243, glutamine 284, and glutamate 298 each contribute to the ATP site. The ATP-grasp 1 domain maps to 133 to 327; that stretch reads RALMNELGEP…IAKLAAKIAV (195 aa). Residues glutamine 284, glutamate 298, and asparagine 300 each contribute to the Mg(2+) site. The Mn(2+) site is built by glutamine 284, glutamate 298, and asparagine 300. Residues 402 to 546 form an oligomerization domain region; it reads IGVHHLELNE…YSTYEEENES (145 aa). The tract at residues 547–929 is carbamoyl phosphate synthetic domain; that stretch reads IVTEKPSVIV…ALYKGLVASG (383 aa). The ATP-grasp 2 domain occupies 671-861; that stretch reads EQALSELGIP…MANLATKAIL (191 aa). ATP is bound by residues arginine 707, arginine 746, isoleucine 748, glutamate 752, glycine 777, valine 778, histidine 779, serine 780, glutamine 820, and glutamate 832. Mg(2+)-binding residues include glutamine 820, glutamate 832, and asparagine 834. Mn(2+) is bound by residues glutamine 820, glutamate 832, and asparagine 834. Residues 930–1064 form the MGS-like domain; sequence IQIQPHGAVL…TAMTEGLVRS (135 aa). Positions 930-1064 are allosteric domain; the sequence is IQIQPHGAVL…TAMTEGLVRS (135 aa).

It belongs to the CarB family. In terms of assembly, composed of two chains; the small (or glutamine) chain promotes the hydrolysis of glutamine to ammonia, which is used by the large (or ammonia) chain to synthesize carbamoyl phosphate. Tetramer of heterodimers (alpha,beta)4. Requires Mg(2+) as cofactor. Mn(2+) serves as cofactor.

It catalyses the reaction hydrogencarbonate + L-glutamine + 2 ATP + H2O = carbamoyl phosphate + L-glutamate + 2 ADP + phosphate + 2 H(+). The enzyme catalyses hydrogencarbonate + NH4(+) + 2 ATP = carbamoyl phosphate + 2 ADP + phosphate + 2 H(+). It participates in amino-acid biosynthesis; L-arginine biosynthesis; carbamoyl phosphate from bicarbonate: step 1/1. The protein operates within pyrimidine metabolism; UMP biosynthesis via de novo pathway; (S)-dihydroorotate from bicarbonate: step 1/3. Its function is as follows. Small subunit of the glutamine-dependent carbamoyl phosphate synthetase (CPSase). CPSase catalyzes the formation of carbamoyl phosphate from the ammonia moiety of glutamine, carbonate, and phosphate donated by ATP, constituting the first step of the biosynthetic pathway leading to pyrimidine nucleotides. The large subunit (synthetase) binds the substrates ammonia (free or transferred from glutamine from the small subunit), hydrogencarbonate and ATP and carries out an ATP-coupled ligase reaction, activating hydrogencarbonate by forming carboxy phosphate which reacts with ammonia to form carbamoyl phosphate. This Geobacillus stearothermophilus (Bacillus stearothermophilus) protein is Carbamoyl phosphate synthase pyrimidine-specific large chain (pyrAB).